Here is a 222-residue protein sequence, read N- to C-terminus: Chorionic somatomammotropin hormone-like 1 (222 aa).

A signal peptide spans 1-26 (MAAGSRTSLLLAFALLCLPWLQEAGA). Zn(2+) contacts are provided by H44 and E205. C213 and C220 are joined by a disulfide.

It belongs to the somatotropin/prolactin family.

The protein resides in the secreted. May be a novel gestational hormone required to compensate for absence of other members of the GH/CS cluster during gestation. The protein is Chorionic somatomammotropin hormone-like 1 (CSHL1) of Homo sapiens (Human).